The chain runs to 371 residues: Opsin, ultraviolet-sensitive (371 aa).

The Extracellular portion of the chain corresponds to M1–A52. A glycan (N-linked (GlcNAc...) asparagine) is linked at N3. A helical transmembrane segment spans residues L53–F73. Residues C74–N84 are Cytoplasmic-facing. Residues M85–I105 traverse the membrane as a helical segment. The Extracellular segment spans residues Y106–Q121. C120 and C197 are disulfide-bonded. A helical membrane pass occupies residues I122–A142. The Cytoplasmic portion of the chain corresponds to Y143–Q161. A helical transmembrane segment spans residues V162–M182. Residues G183–R209 lie on the Extracellular side of the membrane. A helical membrane pass occupies residues I210–Y230. The Cytoplasmic portion of the chain corresponds to Y231–T278. A helical membrane pass occupies residues I279 to F299. Topologically, residues G300–K302 are extracellular. A helical transmembrane segment spans residues A303–L323. K318 bears the N6-(retinylidene)lysine mark. The Cytoplasmic portion of the chain corresponds to D324 to S371.

This sequence belongs to the G-protein coupled receptor 1 family. Opsin subfamily. Phosphorylated on some or all of the serine and threonine residues present in the C-terminal region. Expressed in the dorsal region of the retina.

It is found in the membrane. Its function is as follows. Visual pigments are the light-absorbing molecules that mediate vision. They consist of an apoprotein, opsin, covalently linked to 11-cis-retinal. The chain is Opsin, ultraviolet-sensitive (UVOP) from Apis mellifera (Honeybee).